The primary structure comprises 426 residues: Histidine--tRNA ligase 1 (426 aa).

Belongs to the class-II aminoacyl-tRNA synthetase family. As to quaternary structure, homodimer.

It is found in the cytoplasm. It catalyses the reaction tRNA(His) + L-histidine + ATP = L-histidyl-tRNA(His) + AMP + diphosphate + H(+). The sequence is that of Histidine--tRNA ligase 1 from Shouchella clausii (strain KSM-K16) (Alkalihalobacillus clausii).